We begin with the raw amino-acid sequence, 98 residues long: Large ribosomal subunit protein uL23 (98 aa).

Belongs to the universal ribosomal protein uL23 family. Part of the 50S ribosomal subunit. Contacts protein L29, and trigger factor when it is bound to the ribosome.

Its function is as follows. One of the early assembly proteins it binds 23S rRNA. One of the proteins that surrounds the polypeptide exit tunnel on the outside of the ribosome. Forms the main docking site for trigger factor binding to the ribosome. This chain is Large ribosomal subunit protein uL23, found in Rickettsia peacockii (strain Rustic).